The primary structure comprises 406 residues: COP9 signalosome complex subunit 4 (406 aa).

Alanine 2 is subject to N-acetylalanine. Lysine 25 carries the post-translational modification N6-acetyllysine. The PCI domain occupies 197 to 366 (YRRKFIEAAQ…GIVHFETREA (170 aa)).

It belongs to the CSN4 family. Component of the CSN complex, composed of COPS1/GPS1, COPS2, COPS3, COPS4, COPS5, COPS6, COPS7 (COPS7A or COPS7B), COPS8 and COPS9. In the complex, it probably interacts directly with COPS1, COPS2, COPS3, COPS5, COPS6, COPS7 (COPS7A or COPS7B) and COPS8. Interacts with TOR1A; the interaction is direct and associates TOR1A and SNAPIN with the CSN complex. Interacts with STON2; controls STON2 neddylation levels. Interacts with ERCC6.

The protein resides in the cytoplasm. It is found in the nucleus. It localises to the cytoplasmic vesicle. The protein localises to the secretory vesicle. Its subcellular location is the synaptic vesicle. Its function is as follows. Component of the COP9 signalosome complex (CSN), a complex involved in various cellular and developmental processes. The CSN complex is an essential regulator of the ubiquitin (Ubl) conjugation pathway by mediating the deneddylation of the cullin subunits of SCF-type E3 ligase complexes, leading to decrease the Ubl ligase activity of SCF-type complexes such as SCF, CSA or DDB2. Also involved in the deneddylation of non-cullin subunits such as STON2. The complex is also involved in phosphorylation of p53/TP53, c-jun/JUN, IkappaBalpha/NFKBIA, ITPK1, IRF8/ICSBP and SNAPIN, possibly via its association with CK2 and PKD kinases. CSN-dependent phosphorylation of TP53 and JUN promotes and protects degradation by the Ubl system, respectively. The protein is COP9 signalosome complex subunit 4 (COPS4) of Pongo abelii (Sumatran orangutan).